A 406-amino-acid polypeptide reads, in one-letter code: 2,3-diketo-5-methylthiopentyl-1-phosphate enolase (406 aa).

The Proton acceptor role is filled by Lys94. Residues Lys143, 169–172 (KDDE), His260, Gly332, and 354–355 (GG) contribute to the substrate site. Mg(2+)-binding residues include Lys169, Asp171, and Glu172. N6-carboxylysine is present on Lys169.

It belongs to the RuBisCO large chain family. Type IV subfamily. In terms of assembly, homodimer. Requires Mg(2+) as cofactor.

It carries out the reaction 5-methylsulfanyl-2,3-dioxopentyl phosphate = 2-hydroxy-5-methylsulfanyl-3-oxopent-1-enyl phosphate. The protein operates within amino-acid biosynthesis; L-methionine biosynthesis via salvage pathway; L-methionine from S-methyl-5-thio-alpha-D-ribose 1-phosphate: step 3/6. Functionally, catalyzes the enolization of 2,3-diketo-5-methylthiopentyl-1-phosphate (DK-MTP-1-P) into 2-hydroxy-3-keto-5-methylthiopentenyl-1-phosphate (HK-MTPenyl-1-P). This Bacillus pumilus (strain SAFR-032) protein is 2,3-diketo-5-methylthiopentyl-1-phosphate enolase.